Here is a 116-residue protein sequence, read N- to C-terminus: Putative BPES syndrome breakpoint region protein (116 aa).

In terms of tissue distribution, seems to be expressed only in testis.

This chain is Putative BPES syndrome breakpoint region protein (BPESC1), found in Homo sapiens (Human).